Here is a 282-residue protein sequence, read N- to C-terminus: B3 domain-containing protein At5g25475 (282 aa).

The segment at residues 20-114 (WKSLSPGQTW…NLEVQIFKNN (95 aa)) is a DNA-binding region (TF-B3). The disordered stretch occupies residues 127 to 178 (PETEPFHPTPKKPHKETTPASSFASGSGCSANGGTNGRGKQRSSDVKNPERY). Positions 144–159 (TPASSFASGSGCSANG) are enriched in low complexity.

Its subcellular location is the nucleus. The chain is B3 domain-containing protein At5g25475 from Arabidopsis thaliana (Mouse-ear cress).